We begin with the raw amino-acid sequence, 78 residues long: Large ribosomal subunit protein bL28 (78 aa).

It belongs to the bacterial ribosomal protein bL28 family.

This is Large ribosomal subunit protein bL28 from Methylococcus capsulatus (strain ATCC 33009 / NCIMB 11132 / Bath).